The chain runs to 488 residues: Cysteine--tRNA ligase (488 aa).

Position 28 (cysteine 28) interacts with Zn(2+). The 'HIGH' region motif lies at 30 to 40 (PTVYDDAHLGH). The Zn(2+) site is built by cysteine 209, histidine 239, and glutamate 243. The 'KMSKS' region signature appears at 271–275 (KMSKS). Lysine 274 contributes to the ATP binding site.

This sequence belongs to the class-I aminoacyl-tRNA synthetase family. Monomer. The cofactor is Zn(2+).

The protein localises to the cytoplasm. It catalyses the reaction tRNA(Cys) + L-cysteine + ATP = L-cysteinyl-tRNA(Cys) + AMP + diphosphate. This chain is Cysteine--tRNA ligase, found in Helicobacter hepaticus (strain ATCC 51449 / 3B1).